Here is a 152-residue protein sequence, read N- to C-terminus: Membrane-spanning 4-domains subfamily A member 13 (152 aa).

Helical transmembrane passes span 1–21 (MIGIFHIFMWYFLLVLYMGQI), 32–52 (TYKTGCTLWGIFFIIAGVFLI), 66–86 (TLIINIICIITTITAVTLTII), and 111–131 (ILLFFYGLEFSIALTHSIYSC).

This sequence belongs to the MS4A family.

The protein resides in the membrane. Its function is as follows. May be involved in signal transduction as a component of a multimeric receptor complex. The chain is Membrane-spanning 4-domains subfamily A member 13 (MS4A13) from Homo sapiens (Human).